Here is a 344-residue protein sequence, read N- to C-terminus: N-acetyl-gamma-glutamyl-phosphate reductase (344 aa).

Residue cysteine 149 is part of the active site.

This sequence belongs to the NAGSA dehydrogenase family. Type 1 subfamily.

It is found in the cytoplasm. It catalyses the reaction N-acetyl-L-glutamate 5-semialdehyde + phosphate + NADP(+) = N-acetyl-L-glutamyl 5-phosphate + NADPH + H(+). It participates in amino-acid biosynthesis; L-arginine biosynthesis; N(2)-acetyl-L-ornithine from L-glutamate: step 3/4. In terms of biological role, catalyzes the NADPH-dependent reduction of N-acetyl-5-glutamyl phosphate to yield N-acetyl-L-glutamate 5-semialdehyde. The chain is N-acetyl-gamma-glutamyl-phosphate reductase from Shouchella clausii (strain KSM-K16) (Alkalihalobacillus clausii).